A 453-amino-acid polypeptide reads, in one-letter code: ACT domain-containing protein ACR3 (453 aa).

4 ACT domains span residues leucine 37–glutamine 112, serine 130–arginine 212, valine 266–glutamate 341, and serine 344–arginine 423.

In terms of tissue distribution, expressed in roots, cotyledons, rosette and cauline leaves, sepals, style, and pedicels and tips of young developing siliques.

Functionally, may bind amino acids. The polypeptide is ACT domain-containing protein ACR3 (Arabidopsis thaliana (Mouse-ear cress)).